The chain runs to 209 residues: Large ribosomal subunit protein uL3 (209 aa).

The interval 122 to 151 (AIKRHGQSRGPMSHGSRYHRRPGSMGPVDP) is disordered.

The protein belongs to the universal ribosomal protein uL3 family. Part of the 50S ribosomal subunit. Forms a cluster with proteins L14 and L19.

Its function is as follows. One of the primary rRNA binding proteins, it binds directly near the 3'-end of the 23S rRNA, where it nucleates assembly of the 50S subunit. The chain is Large ribosomal subunit protein uL3 from Bacillus velezensis (strain DSM 23117 / BGSC 10A6 / LMG 26770 / FZB42) (Bacillus amyloliquefaciens subsp. plantarum).